The primary structure comprises 354 residues: Uroporphyrinogen decarboxylase (354 aa).

Residues 27–31 (RQAGR), Asp77, Tyr154, Thr209, and His327 each bind substrate.

Belongs to the uroporphyrinogen decarboxylase family. As to quaternary structure, homodimer.

The protein localises to the cytoplasm. The catalysed reaction is uroporphyrinogen III + 4 H(+) = coproporphyrinogen III + 4 CO2. It participates in porphyrin-containing compound metabolism; protoporphyrin-IX biosynthesis; coproporphyrinogen-III from 5-aminolevulinate: step 4/4. Its function is as follows. Catalyzes the decarboxylation of four acetate groups of uroporphyrinogen-III to yield coproporphyrinogen-III. The sequence is that of Uroporphyrinogen decarboxylase from Histophilus somni (strain 129Pt) (Haemophilus somnus).